Here is a 214-residue protein sequence, read N- to C-terminus: LexA repressor (214 aa).

Residues 26-46 constitute a DNA-binding region (H-T-H motif); the sequence is VREIGEAVGLSSSSTVHSYLK. Residues Ser138 and Lys175 each act as for autocatalytic cleavage activity in the active site.

The protein belongs to the peptidase S24 family. As to quaternary structure, homodimer.

It carries out the reaction Hydrolysis of Ala-|-Gly bond in repressor LexA.. Represses a number of genes involved in the response to DNA damage (SOS response), including recA and lexA. In the presence of single-stranded DNA, RecA interacts with LexA causing an autocatalytic cleavage which disrupts the DNA-binding part of LexA, leading to derepression of the SOS regulon and eventually DNA repair. In Desulforamulus reducens (strain ATCC BAA-1160 / DSM 100696 / MI-1) (Desulfotomaculum reducens), this protein is LexA repressor.